The sequence spans 931 residues: MNQSPAAFGPRRGGSPAVVAGAGARRNESQDYLLMDSELGDDAQPPLPAYGYYPCLRGTDSRLTHRRQTVLREKGRRLANRGPAYMFNDHSTSLSIEEERFLDAAEYGNIPVVRKMLEECLSLNVNCVDYMGQNALQLAVANEHLEITELLLKKENLSRVGDALLLAISKGYVRIVEAILSHPAFAEGKRLATSPSQSELQQDDFYAYDEDGTRFSHDVTPIILAAHCQEYEIVHTLLRKGARIERPHDYFCKCSECNQKQKHDSFSHSRSRINAYKGLASPAYLSLSSEDPVMTALELSNELAVLANIEKEFKNDYKKLSMQCKDFVVGLLDLCRNTEEVEAILNGDVEIHHSGGDHYRPNLSRLKLAIKYDVKKFVAHPNCQQQLLSIWYENLSGLRQQTMAVKFLVVLAVAVGLPFLALVYWFAPCSKMGKIMRGPFMKFVAHAASFTIFLGLLVMNAADRFEGTKILPNETSTDHAKQLFRMKTSCFSWMEMLIISWVIGMIWAECKEIWTQGPKEYLFELWNMLDFGMLAIFAASFIARFMAFWHASKAQSIIDANDTLKDLTKVTLGDNVKYYNLARIKWDPSDPQIISEGLYAIAVVLSFSRIAYILPANESFGPLQISLGRTVKDIFKFMVIFIMVFVAFMIGMFNLYSYYIGAKQNEAFTTVEESFKTLFWAIFGLSEVKSVVINYNHKFIENIGYVLYGVYNVTMVIVLLNMLIAMINSSFQEIEDDADVEWKFARAKLWFSYFEEGRTLPVPFNLVPSPKSLFYLLLRLKKWISELFQGHKKGFQEDAEMNKRNEGKKFGILGSHEDLSKLSLDRKQFAHSKQSSIRSSEDFQLNSFTNPPRQYQKIMKRLIKRYVLQAQIDKESDEVNEGELKEIKQDISSLRYELLEEKTQNSEDLAELIRKLGEKLSMEPNQEESNR.

Positions 1–24 are disordered; it reads MNQSPAAFGPRRGGSPAVVAGAGA. The Cytoplasmic segment spans residues 1 to 406; that stretch reads MNQSPAAFGP…GLRQQTMAVK (406 aa). A compositionally biased stretch (low complexity) spans 13-24; it reads GGSPAVVAGAGA. ANK repeat units lie at residues 131-160, 162-188, and 217-246; these read MGQNALQLAVANEHLEITELLLKKENLSRV, DALLLAISKGYVRIVEAILSHPAFAEG, and HDVTPIILAAHCQEYEIVHTLLRKGARIER. Residues 407 to 427 form a helical membrane-spanning segment; that stretch reads FLVVLAVAVGLPFLALVYWFA. The Extracellular portion of the chain corresponds to 428-438; the sequence is PCSKMGKIMRG. The chain crosses the membrane as a helical span at residues 439–459; sequence PFMKFVAHAASFTIFLGLLVM. Residues 460 to 487 lie on the Cytoplasmic side of the membrane; sequence NAADRFEGTKILPNETSTDHAKQLFRMK. The helical transmembrane segment at 488 to 508 threads the bilayer; that stretch reads TSCFSWMEMLIISWVIGMIWA. The Extracellular portion of the chain corresponds to 509–521; it reads ECKEIWTQGPKEY. Residues 522–542 form a helical membrane-spanning segment; the sequence is LFELWNMLDFGMLAIFAASFI. At 543–592 the chain is on the cytoplasmic side; the sequence is ARFMAFWHASKAQSIIDANDTLKDLTKVTLGDNVKYYNLARIKWDPSDPQ. The helical transmembrane segment at 593–613 threads the bilayer; the sequence is IISEGLYAIAVVLSFSRIAYI. Over 614–636 the chain is Extracellular; it reads LPANESFGPLQISLGRTVKDIFK. Asn-617 carries N-linked (GlcNAc...) asparagine glycosylation. The stretch at 618–647 is one ANK 4 repeat; the sequence is ESFGPLQISLGRTVKDIFKFMVIFIMVFVA. A helical membrane pass occupies residues 637 to 657; the sequence is FMVIFIMVFVAFMIGMFNLYS. Topologically, residues 658–674 are cytoplasmic; sequence YYIGAKQNEAFTTVEES. The chain crosses the membrane as a helical span at residues 675-695; that stretch reads FKTLFWAIFGLSEVKSVVINY. Residues 696–706 are Extracellular-facing; the sequence is NHKFIENIGYV. Residues 707 to 727 form a helical membrane-spanning segment; it reads LYGVYNVTMVIVLLNMLIAMI. Residues 728–931 are Cytoplasmic-facing; that stretch reads NSSFQEIEDD…MEPNQEESNR (204 aa). Ser-815 carries the post-translational modification Phosphoserine.

The protein belongs to the transient receptor (TC 1.A.4) family. STrpC subfamily. TRPC6 sub-subfamily. In terms of assembly, homodimer; forms channel complex. Interacts with MX1 and RNF24. Phosphorylated by FYN, leading to an increase of TRPC6 channel activity.

The protein localises to the cell membrane. It carries out the reaction Ca(2+)(in) = Ca(2+)(out). In terms of biological role, thought to form a receptor-activated non-selective calcium permeant cation channel. Probably is operated by a phosphatidylinositol second messenger system activated by receptor tyrosine kinases or G-protein coupled receptors. Activated by diacylglycerol (DAG) in a membrane-delimited fashion, independently of protein kinase C. Seems not to be activated by intracellular calcium store depletion. The chain is Short transient receptor potential channel 6 from Bos taurus (Bovine).